The following is a 1510-amino-acid chain: Chromosome partition protein MukB (1510 aa).

The stretch at 6-30 forms a coiled coil; sequence ELENEIELESDEVIMENENVEEIVD. 75-82 contacts ATP; the sequence is GGNGAGKS. Coiled coils occupy residues 346–506, 553–611, 673–706, 821–846, 876–1064, 1094–1149, and 1249–1304; these read QHRL…HKMS, QQTP…EDIS, MQSQLVKERELTMQRDQLEQKRLQLDEQISRLSQ, SAAREKRLEELQIERDEVAEQHAQIA, EALM…IQLQ, ERAR…RELV, and DAIE…LQNI. Residues 707–824 are flexible hinge; that stretch reads PDGSEDPRLN…EIPLFGSAAR (118 aa).

Belongs to the SMC family. MukB subfamily. As to quaternary structure, homodimerization via its hinge domain. Binds to DNA via its C-terminal region. Interacts, and probably forms a ternary complex, with MukE and MukF via its C-terminal region. The complex formation is stimulated by calcium or magnesium. Interacts with tubulin-related protein FtsZ.

The protein resides in the cytoplasm. Its subcellular location is the nucleoid. Functionally, plays a central role in chromosome condensation, segregation and cell cycle progression. Functions as a homodimer, which is essential for chromosome partition. Involved in negative DNA supercoiling in vivo, and by this means organize and compact chromosomes. May achieve or facilitate chromosome segregation by condensation DNA from both sides of a centrally located replisome during cell division. In Haemophilus influenzae (strain PittGG), this protein is Chromosome partition protein MukB.